A 158-amino-acid polypeptide reads, in one-letter code: Transcriptional repressor NrdR (158 aa).

Residues 3–34 (CPFCSFPESRVLDSRPADEGNSIRRRRECGEC) fold into a zinc finger. Residues 49–139 (LVVVKKDGRR…VYRQFGDIYS (91 aa)) enclose the ATP-cone domain.

The protein belongs to the NrdR family. It depends on Zn(2+) as a cofactor.

Negatively regulates transcription of bacterial ribonucleotide reductase nrd genes and operons by binding to NrdR-boxes. The sequence is that of Transcriptional repressor NrdR from Desulforamulus reducens (strain ATCC BAA-1160 / DSM 100696 / MI-1) (Desulfotomaculum reducens).